The chain runs to 587 residues: Aspartate--tRNA ligase (587 aa).

Glutamate 175 contacts L-aspartate. An aspartate region spans residues 199 to 202; it reads QQFK. L-aspartate contacts are provided by arginine 221 and histidine 446. 221 to 223 contributes to the ATP binding site; the sequence is RDE. ATP is bound at residue glutamate 480. Residue arginine 487 participates in L-aspartate binding. 532–535 is a binding site for ATP; it reads GVDR.

It belongs to the class-II aminoacyl-tRNA synthetase family. Type 1 subfamily. In terms of assembly, homodimer.

It localises to the cytoplasm. The catalysed reaction is tRNA(Asp) + L-aspartate + ATP = L-aspartyl-tRNA(Asp) + AMP + diphosphate. Functionally, catalyzes the attachment of L-aspartate to tRNA(Asp) in a two-step reaction: L-aspartate is first activated by ATP to form Asp-AMP and then transferred to the acceptor end of tRNA(Asp). This chain is Aspartate--tRNA ligase, found in Streptomyces avermitilis (strain ATCC 31267 / DSM 46492 / JCM 5070 / NBRC 14893 / NCIMB 12804 / NRRL 8165 / MA-4680).